The chain runs to 66 residues: Truncated interferon antagonist OPG039 (66 aa).

One copy of the ANK repeat lies at 29 to 58; it reads HGHSALYYAIADNNMRLVCTLLNAGALKNL.

The protein belongs to the orthopoxvirus OPG039 family.

The polypeptide is Truncated interferon antagonist OPG039 (OPG040) (Homo sapiens (Human)).